The sequence spans 904 residues: Translation initiation factor IF-2 (904 aa).

Positions 239-316 (QAATQAKTSE…DDGQGSFQAP (78 aa)) are disordered. Positions 248–278 (EGAEKGTLHKKPETPGKKGDKGGRAADDGKK) are enriched in basic and acidic residues. A tr-type G domain is found at 404–571 (HRAPVVTVMG…QVLLQAEILE (168 aa)). The G1 stretch occupies residues 413–420 (GHVDHGKT). A GTP-binding site is contributed by 413–420 (GHVDHGKT). A G2 region spans residues 438–442 (GITQH). Residues 459–462 (DTPG) are G3. GTP-binding positions include 459–463 (DTPGH) and 513–516 (NKID). The segment at 513–516 (NKID) is G4. The tract at residues 549 to 551 (SAK) is G5.

It belongs to the TRAFAC class translation factor GTPase superfamily. Classic translation factor GTPase family. IF-2 subfamily.

It is found in the cytoplasm. In terms of biological role, one of the essential components for the initiation of protein synthesis. Protects formylmethionyl-tRNA from spontaneous hydrolysis and promotes its binding to the 30S ribosomal subunits. Also involved in the hydrolysis of GTP during the formation of the 70S ribosomal complex. The chain is Translation initiation factor IF-2 from Dechloromonas aromatica (strain RCB).